We begin with the raw amino-acid sequence, 207 residues long: Uracil phosphoribosyltransferase (207 aa).

5-phospho-alpha-D-ribose 1-diphosphate-binding positions include Arg-77, Arg-102, and 129-137; that span reads DPMLATGGS. Residues Ile-192 and 197 to 199 contribute to the uracil site; that span reads GDA. Asp-198 is a 5-phospho-alpha-D-ribose 1-diphosphate binding site.

Belongs to the UPRTase family. Requires Mg(2+) as cofactor.

It carries out the reaction UMP + diphosphate = 5-phospho-alpha-D-ribose 1-diphosphate + uracil. It functions in the pathway pyrimidine metabolism; UMP biosynthesis via salvage pathway; UMP from uracil: step 1/1. Allosterically activated by GTP. Functionally, catalyzes the conversion of uracil and 5-phospho-alpha-D-ribose 1-diphosphate (PRPP) to UMP and diphosphate. The sequence is that of Uracil phosphoribosyltransferase from Mycobacterium marinum (strain ATCC BAA-535 / M).